Here is a 432-residue protein sequence, read N- to C-terminus: MSELLVTGGQVLRPDLTVERADVLVSQDSGDIVAVDDPGTLDGDDELDASDGLVIPGLVNAHTHVAMTLLRGLADDKPLDAWLQEDVWPVEAELTADDIRAGAELGLVEMIRSGTTALSDMYFEVEEIADAVDQAGMRAVLGFTAVTVGKDDEAARSDLEESLDVARKLDGAADGRVRTTFQPHSLTTVGEEYLREFVPQALEDDLSIHLHANETRDEVTPIVDEHGQRPLAYADNIGLLDGDTYVAHGVHVDDSEIDLLAETGTGVAHCPASNMKLASGMAPVQDLLDAGVTVGIGTDGAASNNDLDMFDEMRDAAMIGKLAADDASAVDAGTVVEMATANGAALLGFDSGRIETGANADLAVIDLDAPHLTPAHDLVSHLAYAVHGSDVRHTVCDGEVLMRDRTVEVFDEQAVRERASEHAASLVERAGD.

Residues histidine 62 and histidine 64 each coordinate Zn(2+). Substrate-binding residues include glutamate 91 and histidine 184. Histidine 211 is a Zn(2+) binding site. The substrate site is built by glutamate 214 and aspartate 299. Aspartate 299 contacts Zn(2+).

It belongs to the metallo-dependent hydrolases superfamily. MTA/SAH deaminase family. It depends on Zn(2+) as a cofactor.

It carries out the reaction S-adenosyl-L-homocysteine + H2O + H(+) = S-inosyl-L-homocysteine + NH4(+). The catalysed reaction is S-methyl-5'-thioadenosine + H2O + H(+) = S-methyl-5'-thioinosine + NH4(+). Functionally, catalyzes the deamination of 5-methylthioadenosine and S-adenosyl-L-homocysteine into 5-methylthioinosine and S-inosyl-L-homocysteine, respectively. Is also able to deaminate adenosine. The chain is 5-methylthioadenosine/S-adenosylhomocysteine deaminase from Haloarcula marismortui (strain ATCC 43049 / DSM 3752 / JCM 8966 / VKM B-1809) (Halobacterium marismortui).